The chain runs to 468 residues: RUS family member 1 (468 aa).

Residue Ala-2 is modified to N-acetylalanine. The residue at position 49 (Thr-49) is a Phosphothreonine. Residues Leu-247–Leu-267 form a helical membrane-spanning segment.

The protein belongs to the RUS1 family.

The protein resides in the membrane. This chain is RUS family member 1 (Rusf1), found in Pongo abelii (Sumatran orangutan).